The following is a 435-amino-acid chain: Transcriptional enhancer factor TEF-5 (435 aa).

The segment covering 1–12 (MASNSWNASSSP) has biased composition (polar residues). The disordered stretch occupies residues 1 to 34 (MASNSWNASSSPGEAREDGPEGLDKGLDNDAEGV). N-acetylalanine is present on alanine 2. A compositionally biased stretch (basic and acidic residues) spans 14 to 28 (EAREDGPEGLDKGLD). The TEA DNA-binding region spans 28 to 104 (DNDAEGVWSP…QVLARKKVRE (77 aa)). Phosphoserine is present on serine 148. The interval 173-435 (GPSQDIKPFA…QHHVYKLVKD (263 aa)) is transcriptional activation.

Interacts with YAP1 and WWTR1/TAZ. Preferentially expressed in the placenta.

The protein localises to the nucleus. Its function is as follows. Transcription factor which plays a key role in the Hippo signaling pathway, a pathway involved in organ size control and tumor suppression by restricting proliferation and promoting apoptosis. The core of this pathway is composed of a kinase cascade wherein MST1/MST2, in complex with its regulatory protein SAV1, phosphorylates and activates LATS1/2 in complex with its regulatory protein MOB1, which in turn phosphorylates and inactivates YAP1 oncoprotein and WWTR1/TAZ. Acts by mediating gene expression of YAP1 and WWTR1/TAZ, thereby regulating cell proliferation, migration and epithelial mesenchymal transition (EMT) induction. Binds to multiple functional elements of the human chorionic somatomammotropin-B gene enhancer. The polypeptide is Transcriptional enhancer factor TEF-5 (TEAD3) (Homo sapiens (Human)).